Here is a 469-residue protein sequence, read N- to C-terminus: Calcium/calmodulin-dependent protein kinase type IV (469 aa).

2 positions are modified to phosphoserine; by autocatalysis: Ser11 and Ser12. The Protein kinase domain maps to 42–296 (FEVESELGRG…TFQALQHPWV (255 aa)). ATP contacts are provided by residues 48–56 (LGRGATSIV) and Lys71. The O-linked (GlcNAc) threonine glycan is linked to Thr53. A glycan (O-linked (GlcNAc) serine) is linked at Ser54. O-linked (GlcNAc) serine glycosylation is present at Ser133. Asp160 serves as the catalytic Proton acceptor. Ser185 carries O-linked (GlcNAc) serine glycosylation. Thr196 carries the phosphothreonine modification. Residues 297–336 (TGKAANFVHMDTAQKKLQEFNARRKLKAAVKAVVASSRLG) form an autoinhibitory domain region. Positions 302 to 319 (NFVHMDTAQKKLQEFNAR) are PP2A-binding. The calmodulin-binding stretch occupies residues 318–337 (ARRKLKAAVKAVVASSRLGS). The residue at position 332 (Ser332) is a Phosphoserine; by autocatalysis. Residues 336–469 (GSASSSHTSI…PQQDAIQPEY (134 aa)) are disordered. A Phosphoserine modification is found at Ser337. Ser340, Ser341, and Ser352 each carry an O-linked (GlcNAc) serine glycan. The segment covering 360 to 374 (DAKDSTDLLGKKMQE) has biased composition (basic and acidic residues). Residues 375 to 388 (EDQEEDQVEAEASA) are compositionally biased toward acidic residues. Over residues 389 to 409 (DEMRKLQSEEVEKDAGVKEEE) the composition is skewed to basic and acidic residues. The span at 417 to 426 (DPEDELETDD) shows a compositional bias: acidic residues. Over residues 427–441 (PEMKRDSEEKLKSVE) the composition is skewed to basic and acidic residues. Residues Ser433 and Ser439 each carry the phosphoserine modification. A compositionally biased stretch (acidic residues) spans 442–453 (EEMDPMTEEEAP).

Belongs to the protein kinase superfamily. CAMK Ser/Thr protein kinase family. CaMK subfamily. Monomer. Interacts with protein phosphatase 2A (PPP2CA/PPP2CB); the interaction is mutually exclusive with binding to Ca(2+)/calmodulin. In terms of processing, phosphorylated by CaMKK1 and CaMKK2 on Thr-196. Dephosphorylated by protein phosphatase 2A. Autophosphorylated on Ser-11 and Ser-12. Glycosylation at Ser-185 modulates the phosphorylation of CaMK4 at Thr-196 and negatively regulates its activity toward CREB1 in basal conditions and during early inomycin stimulation. Expressed in brain and testis.

It is found in the cytoplasm. The protein localises to the nucleus. The catalysed reaction is L-seryl-[protein] + ATP = O-phospho-L-seryl-[protein] + ADP + H(+). It carries out the reaction L-threonyl-[protein] + ATP = O-phospho-L-threonyl-[protein] + ADP + H(+). Activated by Ca(2+)/calmodulin. Binding of calmodulin results in conformational change that relieves intrasteric autoinhibition and allows phosphorylation of Thr-196 within the activation loop by CaMKK1 or CaMKK2. Phosphorylation of Thr-196 results in a 10-20-fold increase in total activity to generate Ca(2+)/calmodulin-independent activity. Autophosphorylation of the N-terminus Ser-11 and Ser-12 is required for full activation. Inactivated by protein phosphatase 2A (PPP2CA/PPP2CB) which dephosphorylates Thr-196, thereby terminating autonomous activity and helping to maintain the enzyme in its autoinhibited state. Calcium/calmodulin-dependent protein kinase that operates in the calcium-triggered CaMKK-CaMK4 signaling cascade and regulates, mainly by phosphorylation, the activity of several transcription activators, such as CREB1, MEF2D, JUN and RORA, which play pivotal roles in immune response, inflammation, and memory consolidation. In the thymus, regulates the CD4(+)/CD8(+) double positive thymocytes selection threshold during T-cell ontogeny. In CD4 memory T-cells, is required to link T-cell antigen receptor (TCR) signaling to the production of IL2, IFNG and IL4 (through the regulation of CREB and MEF2). Regulates the differentiation and survival phases of osteoclasts and dendritic cells (DCs). Mediates DCs survival by linking TLR4 and the regulation of temporal expression of BCL2. Phosphorylates the transcription activator CREB1 on 'Ser-133' in hippocampal neuron nuclei and contribute to memory consolidation and long term potentiation (LTP) in the hippocampus. Can activate the MAP kinases MAPK1/ERK2, MAPK8/JNK1 and MAPK14/p38 and stimulate transcription through the phosphorylation of ELK1 and ATF2. Can also phosphorylate in vitro CREBBP, PRM2, MEF2A and STMN1/OP18. May be involved in spermatogenesis. The polypeptide is Calcium/calmodulin-dependent protein kinase type IV (Camk4) (Mus musculus (Mouse)).